Here is a 304-residue protein sequence, read N- to C-terminus: Ribosomal protein L11 methyltransferase (304 aa).

The S-adenosyl-L-methionine site is built by Thr152, Gly173, Asp195, and Asn234.

This sequence belongs to the methyltransferase superfamily. PrmA family.

The protein localises to the cytoplasm. It carries out the reaction L-lysyl-[protein] + 3 S-adenosyl-L-methionine = N(6),N(6),N(6)-trimethyl-L-lysyl-[protein] + 3 S-adenosyl-L-homocysteine + 3 H(+). Methylates ribosomal protein L11. The chain is Ribosomal protein L11 methyltransferase from Cupriavidus metallidurans (strain ATCC 43123 / DSM 2839 / NBRC 102507 / CH34) (Ralstonia metallidurans).